A 440-amino-acid chain; its full sequence is NADH-quinone oxidoreductase subunit H (440 aa).

A run of 9 helical transmembrane segments spans residues 11–31, 83–103, 123–143, 164–184, 207–227, 261–281, 299–319, 331–351, and 366–386; these read VWLI…WTIF, IVFN…WSVI, VPVA…GVVL, MISY…FSGS, IAGH…ITMF, FLAE…LFLG, WWGL…FVWV, FMDL…LLVA, and VFLV…FMGG.

It belongs to the complex I subunit 1 family. In terms of assembly, NDH-1 is composed of 14 different subunits. Subunits NuoA, H, J, K, L, M, N constitute the membrane sector of the complex.

It is found in the cell membrane. It carries out the reaction a quinone + NADH + 5 H(+)(in) = a quinol + NAD(+) + 4 H(+)(out). NDH-1 shuttles electrons from NADH, via FMN and iron-sulfur (Fe-S) centers, to quinones in the respiratory chain. The immediate electron acceptor for the enzyme in this species is believed to be ubiquinone. Couples the redox reaction to proton translocation (for every two electrons transferred, four hydrogen ions are translocated across the cytoplasmic membrane), and thus conserves the redox energy in a proton gradient. This subunit may bind ubiquinone. The protein is NADH-quinone oxidoreductase subunit H of Cutibacterium acnes (strain DSM 16379 / KPA171202) (Propionibacterium acnes).